The following is a 429-amino-acid chain: tRNA threonylcarbamoyladenosine dehydratase 1 (429 aa).

Helical transmembrane passes span Asn-3 to Ala-23 and Glu-74 to Ile-94. Position 259 is a phosphoserine (Ser-259). A helical membrane pass occupies residues Leu-279 to Thr-299.

Belongs to the HesA/MoeB/ThiF family.

Its subcellular location is the mitochondrion outer membrane. In terms of biological role, catalyzes the ATP-dependent dehydration of threonylcarbamoyladenosine at position 37 (t(6)A37) to form cyclic t(6)A37 (ct(6)A37) in tRNAs that read codons beginning with adenine. This Saccharomyces cerevisiae (strain ATCC 204508 / S288c) (Baker's yeast) protein is tRNA threonylcarbamoyladenosine dehydratase 1 (TCD1).